A 348-amino-acid polypeptide reads, in one-letter code: NADH-ubiquinone oxidoreductase chain 2 (348 aa).

Transmembrane regions (helical) follow at residues 2-22 (SPYVFLIISISLFLGTSLTLF), 26-46 (WLMAWMGLEINTLAIIPMMTY), 55-75 (AAIKYFLTQATASMLVMFAII), 96-116 (VLMTLALAMKLGLAPFHFWVP), 149-169 (LNMKVLITLAFLSTMLGGWGG), 178-198 (ILAYSSIAHMGWMTIVMMINP), 199-219 (SLALLNLLIYIIATLTLFLML), 242-262 (TAILLTLLSLGGLPPLTGFMP), 276-296 (IIMATLMALSALLNLFFYMRI), and 323-343 (INIIPTLTIISSLLLPLTPLL).

Belongs to the complex I subunit 2 family. As to quaternary structure, core subunit of respiratory chain NADH dehydrogenase (Complex I) which is composed of 45 different subunits. Interacts with TMEM242.

The protein localises to the mitochondrion inner membrane. The enzyme catalyses a ubiquinone + NADH + 5 H(+)(in) = a ubiquinol + NAD(+) + 4 H(+)(out). Its function is as follows. Core subunit of the mitochondrial membrane respiratory chain NADH dehydrogenase (Complex I) that is believed to belong to the minimal assembly required for catalysis. Complex I functions in the transfer of electrons from NADH to the respiratory chain. The immediate electron acceptor for the enzyme is believed to be ubiquinone. The chain is NADH-ubiquinone oxidoreductase chain 2 from Osphranter robustus (Wallaroo).